A 188-amino-acid polypeptide reads, in one-letter code: UPF0200 protein YG5714_1176 (188 aa).

15–22 contacts ATP; the sequence is GMPGSGKS.

The protein belongs to the UPF0200 family.

This chain is UPF0200 protein YG5714_1176, found in Saccharolobus islandicus (strain Y.G.57.14 / Yellowstone #1) (Sulfolobus islandicus).